A 265-amino-acid polypeptide reads, in one-letter code: Probable U2 small nuclear ribonucleoprotein A' (265 aa).

4 LRR repeats span residues 20–41, 43–64, 65–86, and 89–110; these read RERE…GATL, QFDT…PHLP, RLKC…LEEA, and NLGS…EPLV. In terms of domain architecture, LRRCT spans 123–161; the sequence is NPVSTKPNYREYMAYKFPQLRLLDFRKIKQKDRQAAQEF.

It belongs to the U2 small nuclear ribonucleoprotein A family. In terms of assembly, interacts with the SMN complex.

Its subcellular location is the nucleus. In terms of biological role, involved in pre-mRNA splicing as component of the spliceosome. Associated with sn-RNP U2, where it contributes to the binding of stem loop IV of U2 snRNA. In the germ line, has a role in oogenesis, by regulating spermatogenesis and nurse cell nuclei chromatin decondensation and dispersal, probably by regulating the splicing of proteins necessary for germline differentiation such as the meiotic protein mei-P26. The polypeptide is Probable U2 small nuclear ribonucleoprotein A' (U2A) (Drosophila melanogaster (Fruit fly)).